The primary structure comprises 382 residues: S-adenosylmethionine synthase (382 aa).

Histidine 14 contributes to the ATP binding site. A Mg(2+)-binding site is contributed by aspartate 16. K(+) is bound at residue glutamate 42. The L-methionine site is built by glutamate 55 and glutamine 91. The segment at 91 to 101 (QSENIAMGVNL) is flexible loop. ATP is bound by residues 156-158 (DMK), 222-223 (KF), aspartate 231, 237-238 (RK), alanine 254, and lysine 258. An L-methionine-binding site is contributed by aspartate 231. Position 262 (lysine 262) interacts with L-methionine.

This sequence belongs to the AdoMet synthase family. In terms of assembly, homotetramer; dimer of dimers. It depends on Mg(2+) as a cofactor. Requires K(+) as cofactor.

The protein resides in the cytoplasm. It carries out the reaction L-methionine + ATP + H2O = S-adenosyl-L-methionine + phosphate + diphosphate. It participates in amino-acid biosynthesis; S-adenosyl-L-methionine biosynthesis; S-adenosyl-L-methionine from L-methionine: step 1/1. In terms of biological role, catalyzes the formation of S-adenosylmethionine (AdoMet) from methionine and ATP. The overall synthetic reaction is composed of two sequential steps, AdoMet formation and the subsequent tripolyphosphate hydrolysis which occurs prior to release of AdoMet from the enzyme. This Mycoplasmopsis synoviae (strain 53) (Mycoplasma synoviae) protein is S-adenosylmethionine synthase.